Consider the following 71-residue polypeptide: Small integral membrane protein 31 (71 aa).

A helical membrane pass occupies residues 8 to 28; it reads LEVAFILLAFFIFSLFTLASI. Residues 48 to 57 are compositionally biased toward basic residues; that stretch reads RKRKEFKGKK. Residues 48–71 form a disordered region; the sequence is RKRKEFKGKKNCSDEEHKIETMQP. N-linked (GlcNAc...) asparagine glycosylation is present at Asn58. A compositionally biased stretch (basic and acidic residues) spans 58–71; that stretch reads NCSDEEHKIETMQP.

Its subcellular location is the membrane. In Mus musculus (Mouse), this protein is Small integral membrane protein 31.